A 160-amino-acid polypeptide reads, in one-letter code: Ribosomal RNA large subunit methyltransferase H (160 aa).

S-adenosyl-L-methionine-binding positions include Gly108 and 127–132 (FGKMTW).

The protein belongs to the RNA methyltransferase RlmH family. In terms of assembly, homodimer.

The protein localises to the cytoplasm. The catalysed reaction is pseudouridine(1915) in 23S rRNA + S-adenosyl-L-methionine = N(3)-methylpseudouridine(1915) in 23S rRNA + S-adenosyl-L-homocysteine + H(+). In terms of biological role, specifically methylates the pseudouridine at position 1915 (m3Psi1915) in 23S rRNA. The polypeptide is Ribosomal RNA large subunit methyltransferase H (Beijerinckia indica subsp. indica (strain ATCC 9039 / DSM 1715 / NCIMB 8712)).